A 111-amino-acid polypeptide reads, in one-letter code: Cornifelin (111 aa).

Belongs to the cornifelin family. As to quaternary structure, directly or indirectly cross-linked to CE proteins loricin and involucrin (IVL).

The protein localises to the cytoplasm. In terms of biological role, part of the insoluble cornified cell envelope (CE) of stratified squamous epithelia. The sequence is that of Cornifelin (CNFN) from Bos taurus (Bovine).